Reading from the N-terminus, the 235-residue chain is uncharacterized protein (235 aa).

The protein belongs to the UreF family.

The protein resides in the cytoplasm. Its subcellular location is the nucleus. Functionally, probably facilitates nickel incorporation. This is an uncharacterized protein from Schizosaccharomyces pombe (strain 972 / ATCC 24843) (Fission yeast).